A 414-amino-acid chain; its full sequence is 3-aminobutyryl-CoA aminotransferase (414 aa).

Lys-261 carries the N6-(pyridoxal phosphate)lysine modification.

This sequence belongs to the class-III pyridoxal-phosphate-dependent aminotransferase family. Homodimer. It depends on pyridoxal 5'-phosphate as a cofactor.

It carries out the reaction (3S)-3-aminobutanoyl-CoA + 2-oxoglutarate = acetoacetyl-CoA + L-glutamate. Its pathway is amino-acid degradation; L-lysine degradation via acetate pathway. In terms of biological role, 3-aminobutyryl-CoA aminotransferase that acts specifically on coenzyme A (CoA) esters and catalyzes the conversion of 3-aminobutyryl-CoA into acetoacetyl-CoA in an alternative pathway of lysine fermentation. This Cloacimonas acidaminovorans (strain Evry) protein is 3-aminobutyryl-CoA aminotransferase (kat).